The following is a 453-amino-acid chain: UDP-glycosyltransferase 74E1 (453 aa).

Residues serine 279, serine 332–glutamine 334, histidine 349–glutamate 357, and tryptophan 371–glutamine 374 contribute to the UDP-alpha-D-glucose site.

It belongs to the UDP-glycosyltransferase family.

The protein is UDP-glycosyltransferase 74E1 (UGT74E1) of Arabidopsis thaliana (Mouse-ear cress).